We begin with the raw amino-acid sequence, 596 residues long: (E)-beta-ocimene synthase, chloroplastic (596 aa).

Residues 1 to 35 (MAITHYQMASFQSSFHFCMLRKTLRQKSSLHFAKR) constitute a chloroplast transit peptide. (2E)-geranyl diphosphate is bound by residues arginine 307, aspartate 344, aspartate 348, arginine 485, and asparagine 488. Mg(2+)-binding residues include aspartate 344 and aspartate 348. Residues 344-348 (DDIYD) carry the DDXXD motif motif. Asparagine 488, alanine 492, and glutamate 496 together coordinate Mg(2+).

The protein belongs to the terpene synthase family. Tpsb subfamily. Mg(2+) is required as a cofactor. It depends on Mn(2+) as a cofactor. As to expression, highly expressed in leaves, stems and disk florets. Detected in roots.

Its subcellular location is the plastid. The protein localises to the chloroplast. It catalyses the reaction (2E)-geranyl diphosphate = (E)-beta-ocimene + diphosphate. The protein operates within secondary metabolite biosynthesis; terpenoid biosynthesis. In terms of biological role, monoterpene synthase involved in the biosynthesis of (E)-beta-ocimene as the major product and trace amounts of (Z)-beta-ocimene. Can only accept geranyl diphosphate as substrate. The protein is (E)-beta-ocimene synthase, chloroplastic of Matricaria chamomilla var. recutita (German chamomile).